Consider the following 146-residue polypeptide: Cytochrome c oxidase subunit 5A, mitochondrial (146 aa).

The N-terminal 37 residues, 1 to 37 (MLAAALRRCTAAAAARGLLHPASAPSPAAAVCSIRCY), are a transit peptide targeting the mitochondrion. The SIFI-degron signature appears at 2-16 (LAAALRRCTAAAAAR). Residues Lys-83 and Lys-109 each carry the N6-acetyllysine modification. The residue at position 137 (Thr-137) is a Phosphothreonine.

It belongs to the cytochrome c oxidase subunit 5A family. As to quaternary structure, component of the cytochrome c oxidase (complex IV, CIV), a multisubunit enzyme composed of 14 subunits. The complex is composed of a catalytic core of 3 subunits MT-CO1, MT-CO2 and MT-CO3, encoded in the mitochondrial DNA, and 11 supernumerary subunits COX4I, COX5A, COX5B, COX6A, COX6B, COX6C, COX7A, COX7B, COX7C, COX8 and NDUFA4, which are encoded in the nuclear genome. The complex exists as a monomer or a dimer and forms supercomplexes (SCs) in the inner mitochondrial membrane with NADH-ubiquinone oxidoreductase (complex I, CI) and ubiquinol-cytochrome c oxidoreductase (cytochrome b-c1 complex, complex III, CIII), resulting in different assemblies (supercomplex SCI(1)III(2)IV(1) and megacomplex MCI(2)III(2)IV(2)). Interacts with AFG1L. Interacts with RAB5IF. In response to mitochondrial stress, the precursor protein is ubiquitinated by the SIFI complex in the cytoplasm before mitochondrial import, leading to its degradation. Within the SIFI complex, UBR4 initiates ubiquitin chain that are further elongated or branched by KCMF1.

It is found in the mitochondrion inner membrane. Its pathway is energy metabolism; oxidative phosphorylation. Component of the cytochrome c oxidase, the last enzyme in the mitochondrial electron transport chain which drives oxidative phosphorylation. The respiratory chain contains 3 multisubunit complexes succinate dehydrogenase (complex II, CII), ubiquinol-cytochrome c oxidoreductase (cytochrome b-c1 complex, complex III, CIII) and cytochrome c oxidase (complex IV, CIV), that cooperate to transfer electrons derived from NADH and succinate to molecular oxygen, creating an electrochemical gradient over the inner membrane that drives transmembrane transport and the ATP synthase. Cytochrome c oxidase is the component of the respiratory chain that catalyzes the reduction of oxygen to water. Electrons originating from reduced cytochrome c in the intermembrane space (IMS) are transferred via the dinuclear copper A center (CU(A)) of subunit 2 and heme A of subunit 1 to the active site in subunit 1, a binuclear center (BNC) formed by heme A3 and copper B (CU(B)). The BNC reduces molecular oxygen to 2 water molecules using 4 electrons from cytochrome c in the IMS and 4 protons from the mitochondrial matrix. This chain is Cytochrome c oxidase subunit 5A, mitochondrial (Cox5a), found in Mus musculus (Mouse).